Here is a 176-residue protein sequence, read N- to C-terminus: Peptide deformylase 1 (176 aa).

Positions 99 and 141 each coordinate Fe cation. Residue E142 is part of the active site. Residue H145 participates in Fe cation binding.

It belongs to the polypeptide deformylase family. Fe(2+) is required as a cofactor.

The enzyme catalyses N-terminal N-formyl-L-methionyl-[peptide] + H2O = N-terminal L-methionyl-[peptide] + formate. In terms of biological role, removes the formyl group from the N-terminal Met of newly synthesized proteins. Requires at least a dipeptide for an efficient rate of reaction. N-terminal L-methionine is a prerequisite for activity but the enzyme has broad specificity at other positions. The sequence is that of Peptide deformylase 1 from Nitrosomonas europaea (strain ATCC 19718 / CIP 103999 / KCTC 2705 / NBRC 14298).